A 411-amino-acid polypeptide reads, in one-letter code: GTPase Obg (411 aa).

The 157-residue stretch at 1 to 157 (MQFIDEARFV…REIRLELRVL (157 aa)) folds into the Obg domain. A disordered region spans residues 20–45 (AVSFHREKYRPRGGPDGGRGGDGGSV). The span at 33–43 (GPDGGRGGDGG) shows a compositional bias: gly residues. The region spanning 158 to 330 (SDVGLVGLPN…LERSAEAAPR (173 aa)) is the OBG-type G domain. GTP is bound by residues 164-171 (GLPNAGKS), 189-193 (FTTLT), 212-215 (DIPG), 276-279 (NKVD), and 311-313 (ARL). The Mg(2+) site is built by S171 and T191. Positions 335–411 (VFRPSWRGLR…RIGDVSFEFR (77 aa)) constitute an OCT domain.

It belongs to the TRAFAC class OBG-HflX-like GTPase superfamily. OBG GTPase family. Monomer. Mg(2+) is required as a cofactor.

The protein resides in the cytoplasm. An essential GTPase which binds GTP, GDP and possibly (p)ppGpp with moderate affinity, with high nucleotide exchange rates and a fairly low GTP hydrolysis rate. Plays a role in control of the cell cycle, stress response, ribosome biogenesis and in those bacteria that undergo differentiation, in morphogenesis control. The sequence is that of GTPase Obg from Rubrobacter xylanophilus (strain DSM 9941 / JCM 11954 / NBRC 16129 / PRD-1).